The following is a 381-amino-acid chain: Mannitol-1-phosphate 5-dehydrogenase (381 aa).

NAD(+) is bound at residue 3–14 (AVHFGAGNIGRG).

Belongs to the mannitol dehydrogenase family.

The enzyme catalyses D-mannitol 1-phosphate + NAD(+) = beta-D-fructose 6-phosphate + NADH + H(+). The sequence is that of Mannitol-1-phosphate 5-dehydrogenase from Exiguobacterium sibiricum (strain DSM 17290 / CCUG 55495 / CIP 109462 / JCM 13490 / 255-15).